Here is a 115-residue protein sequence, read N- to C-terminus: Large ribosomal subunit protein bL19 (115 aa).

It belongs to the bacterial ribosomal protein bL19 family.

Functionally, this protein is located at the 30S-50S ribosomal subunit interface and may play a role in the structure and function of the aminoacyl-tRNA binding site. This is Large ribosomal subunit protein bL19 from Streptococcus sanguinis (strain SK36).